Here is a 250-residue protein sequence, read N- to C-terminus: Probable transcriptional regulatory protein Cvib_1432 (250 aa).

The protein belongs to the TACO1 family.

The protein localises to the cytoplasm. The protein is Probable transcriptional regulatory protein Cvib_1432 of Chlorobium phaeovibrioides (strain DSM 265 / 1930) (Prosthecochloris vibrioformis (strain DSM 265)).